The primary structure comprises 249 residues: EID1-like F-box protein 2 (249 aa).

An F-box domain is found at 16-68 (HCTKGHLSEEVLFLMVQHLNWNPNVIATLSCVCKWFDDLAKRLLWKEFCRARA).

The sequence is that of EID1-like F-box protein 2 (EDL2) from Arabidopsis thaliana (Mouse-ear cress).